Reading from the N-terminus, the 312-residue chain is DNA-directed RNA polymerase subunit alpha (312 aa).

Residues 1-229 (MLQYQIDRIE…ELFQPLATVT (229 aa)) are alpha N-terminal domain (alpha-NTD). Positions 245-312 (QIPLEELNLS…ISIPQSRTSA (68 aa)) are alpha C-terminal domain (alpha-CTD).

Belongs to the RNA polymerase alpha chain family. In cyanobacteria the RNAP catalytic core is composed of 2 alpha, 1 beta, 1 beta', 1 gamma and 1 omega subunit. When a sigma factor is associated with the core the holoenzyme is formed, which can initiate transcription.

It catalyses the reaction RNA(n) + a ribonucleoside 5'-triphosphate = RNA(n+1) + diphosphate. Its function is as follows. DNA-dependent RNA polymerase catalyzes the transcription of DNA into RNA using the four ribonucleoside triphosphates as substrates. The polypeptide is DNA-directed RNA polymerase subunit alpha (Prochlorococcus marinus (strain MIT 9313)).